Reading from the N-terminus, the 96-residue chain is Protein RnfH (96 aa).

Belongs to the UPF0125 (RnfH) family.

The polypeptide is Protein RnfH (Cronobacter sakazakii (strain ATCC BAA-894) (Enterobacter sakazakii)).